Here is a 274-residue protein sequence, read N- to C-terminus: Copper chaperone for superoxide dismutase (274 aa).

An HMA domain is found at 11-74; it reads LCTLEFAVQM…LLEGTGRQAV (64 aa). Cu cation-binding residues include cysteine 22 and cysteine 25. Residue lysine 76 forms a Glycyl lysine isopeptide (Lys-Gly) (interchain with G-Cter in ubiquitin) linkage. Residues 88–234 are superoxide dismutase-like; sequence AAVAILGGPG…LACGIIARSA (147 aa). Residues cysteine 141 and cysteine 227 are joined by a disulfide bond. 4 residues coordinate Zn(2+): histidine 147, histidine 155, histidine 164, and aspartate 167. Glycyl lysine isopeptide (Lys-Gly) (interchain with G-Cter in ubiquitin) cross-links involve residues lysine 189, lysine 216, and lysine 241. The Cu cation site is built by cysteine 244 and cysteine 246. Serine 267 bears the Phosphoserine mark.

The protein in the C-terminal section; belongs to the Cu-Zn superoxide dismutase family. In terms of assembly, homodimer, and heterodimer with SOD1. Interacts with COMMD1. Interacts with XIAP/BIRC4. Interacts with SLC31A1(via C-terminal domain); this interaction is Cu(1+)-mediated. The heterodimer CCS:SOD1 interacts with SLC31A1; this heterotrimer is Cu(1+)-mediated and its maintenance is regulated through SOD1 activation. Cu(2+) is required as a cofactor. Requires Zn(2+) as cofactor. Ubiquitinion by XIAP/BIRC4 leads to enhancement of its chaperone activity toward its physiologic target, SOD1, rather than proteasomal degradation. XIAP/BIRC4 preferentially ubiquitinates at Lys-241. In terms of tissue distribution, ubiquitous.

It localises to the cytoplasm. In terms of biological role, delivers copper to copper zinc superoxide dismutase (SOD1). The chain is Copper chaperone for superoxide dismutase from Homo sapiens (Human).